Consider the following 234-residue polypeptide: MGPGGRVARLLAPLMWRRAVSSVAGSAVGAEPGLRLLAVQRLPVGAAFCRACQTPNFVRGLHSEPGLEERAEGTVNEGRPESDAADHTGPKFDIDMMVSLLRQENARDICVIQVPPEMRYTDYFVIVSGTSTRHLHAMAFYVVKMYKHLKCKRDPHVKIEGKDTDDWLCVDFGSMVIHLMLPETREIYELEKLWTLRSYDDQLAQIAPETVPEDFILGIEDDTSSVTPVELKCE.

A disordered region spans residues serine 63 to threonine 88.

Belongs to the Iojap/RsfS family. As to quaternary structure, associates with the mitochondrial ribosome large subunit (39S) via interaction with MRPL12 and/or MRPL14. The interaction generates steric hindrance that is expected to prevent premature association of the 28S and 39S ribosomal subunits. Interacts with intermediates of the mitochondrial ribosome large subunit (mt-LSU) (recruits the mitochondrial ribosome and complex I assembly factor AltMIEF1 and NDUFAB1); regulates mitochondrial ribosomes assembly. Interacts with MRPL12 and MRPL14.

The protein localises to the mitochondrion matrix. Functionally, required for normal mitochondrial ribosome function and mitochondrial translation. May play a role in ribosome biogenesis by preventing premature association of the 28S and 39S ribosomal subunits. Interacts with mitochondrial ribosomal protein uL14m (MRPL14), probably blocking formation of intersubunit bridge B8, preventing association of the 28S and 39S ribosomal subunits. Addition to isolated mitochondrial ribosomal subunits partially inhibits translation, probably by interfering with the association of the 28S and 39S ribosomal subunits and the formation of functional ribosomes. May also participate in the assembly and/or regulation of the stability of the large subunit of the mitochondrial ribosome. May function as a ribosomal silencing factor. In Homo sapiens (Human), this protein is Mitochondrial assembly of ribosomal large subunit protein 1 (MALSU1).